The chain runs to 734 residues: Photosystem I P700 chlorophyll a apoprotein A2 (734 aa).

8 helical membrane-spanning segments follow: residues 46 to 69 (IFAS…FHVA), 135 to 158 (LYTG…LHLQ), 175 to 199 (LNHH…HVAI), 273 to 291 (MAHH…GHMY), 330 to 353 (IHFQ…QHMY), 369 to 395 (AALY…IFFI), 417 to 439 (AIIS…LYVH), and 517 to 535 (FLVH…LILV). 2 residues coordinate [4Fe-4S] cluster: Cys559 and Cys568. 2 consecutive transmembrane segments (helical) span residues 575–596 (AFYL…YWHW) and 643–665 (LSVW…MFLI). Chlorophyll a-binding residues include His654, Met662, and Tyr670. Trp671 contacts phylloquinone. The chain crosses the membrane as a helical span at residues 707 to 727 (LVGLAHFSVGYIFTYAAFLIA).

This sequence belongs to the PsaA/PsaB family. In terms of assembly, the PsaA/B heterodimer binds the P700 chlorophyll special pair and subsequent electron acceptors. PSI consists of a core antenna complex that captures photons, and an electron transfer chain that converts photonic excitation into a charge separation. The eukaryotic PSI reaction center is composed of at least 11 subunits. It depends on P700 is a chlorophyll a/chlorophyll a' dimer, A0 is one or more chlorophyll a, A1 is one or both phylloquinones and FX is a shared 4Fe-4S iron-sulfur center. as a cofactor.

The protein resides in the plastid. It is found in the chloroplast thylakoid membrane. It carries out the reaction reduced [plastocyanin] + hnu + oxidized [2Fe-2S]-[ferredoxin] = oxidized [plastocyanin] + reduced [2Fe-2S]-[ferredoxin]. In terms of biological role, psaA and PsaB bind P700, the primary electron donor of photosystem I (PSI), as well as the electron acceptors A0, A1 and FX. PSI is a plastocyanin-ferredoxin oxidoreductase, converting photonic excitation into a charge separation, which transfers an electron from the donor P700 chlorophyll pair to the spectroscopically characterized acceptors A0, A1, FX, FA and FB in turn. Oxidized P700 is reduced on the lumenal side of the thylakoid membrane by plastocyanin. In Draba nemorosa (Woodland whitlowgrass), this protein is Photosystem I P700 chlorophyll a apoprotein A2.